A 125-amino-acid chain; its full sequence is Scinderin (125 aa).

The residue at position 13 (Tyr13) is a Phosphotyrosine. A 1,2-diacyl-sn-glycero-3-phospho-(1D-myo-inositol-4,5-bisphosphate) contacts are provided by residues 23–30 (KGGLKYKA) and 49–57 (RLLHVKGRR). The Gelsolin-like 1 repeat unit spans residues 59 to 99 (VRATEVPLSWDSFNKGDCFIIDLGSEIYQWFGSSCNKYERL).

This sequence belongs to the villin/gelsolin family.

It localises to the cytoplasm. Its subcellular location is the cytoskeleton. The protein resides in the cell projection. It is found in the podosome. In terms of biological role, ca(2+)-dependent actin filament-severing protein that has a regulatory function in exocytosis by affecting the organization of the microfilament network underneath the plasma membrane. In vitro, also has barbed end capping and nucleating activities in the presence of Ca(2+). Severing activity is inhibited by phosphatidylinositol 4,5-bis-phosphate (PIP2). Required for megakaryocyte differentiation, maturation, polyploidization and apoptosis with the release of platelet-like particles. Plays a role in osteoclastogenesis (OCG) and actin cytoskeletal organization in osteoclasts. Regulates chondrocyte proliferation and differentiation. Inhibits cell proliferation and tumorigenesis. Signaling is mediated by MAPK, p38 and JNK pathways. The polypeptide is Scinderin (SCIN) (Sus scrofa (Pig)).